Here is a 214-residue protein sequence, read N- to C-terminus: Eukaryotic translation initiation factor 4E-1B (214 aa).

MRNA is bound by residues 53 to 54 (WQ), 99 to 100 (WE), 154 to 159 (RAKGDK), and 202 to 204 (TKS).

In terms of tissue distribution, ovary, muscle and testis.

It localises to the cytoplasm. The protein resides in the nucleus. In terms of biological role, does not appear to be a mRNA-cap-binding protein. The chain is Eukaryotic translation initiation factor 4E-1B from Danio rerio (Zebrafish).